A 137-amino-acid chain; its full sequence is MIWKRHLTLDELNATSDNTMVAHLGIVYTRLGDDVLEAEMPVDTRTHQPFGLLHGGASAALAETLGSMAGFMMTRDGQCVVGTELNATHHRPVSEGKVRGVCQPLHLGRQNQSWEIVVFDEQGRRCCTCRLGTAVLG.

Catalysis depends on Glu-63, which acts as the Nucleophile or proton acceptor.

This sequence belongs to the thioesterase PaaI family. In terms of assembly, homotetramer. Dimer of dimers. Interacts specifically with the aryl carrier protein (ArCP) domain of EntB.

The protein resides in the cytoplasm. Its pathway is siderophore biosynthesis; enterobactin biosynthesis. In terms of biological role, required for optimal enterobactin synthesis. Acts as a proofreading enzyme that prevents EntB misacylation by hydrolyzing the thioester bound existing between EntB and wrongly charged molecules. The protein is Proofreading thioesterase EntH of Escherichia coli O6:H1 (strain CFT073 / ATCC 700928 / UPEC).